A 223-amino-acid polypeptide reads, in one-letter code: Translation initiation factor 6 (223 aa).

This sequence belongs to the eIF-6 family.

Its function is as follows. Binds to the 50S ribosomal subunit and prevents its association with the 30S ribosomal subunit to form the 70S initiation complex. This is Translation initiation factor 6 from Sulfolobus acidocaldarius (strain ATCC 33909 / DSM 639 / JCM 8929 / NBRC 15157 / NCIMB 11770).